A 431-amino-acid polypeptide reads, in one-letter code: Tyrosine--tRNA ligase (431 aa).

L-tyrosine is bound at residue Y34. Positions 39–48 match the 'HIGH' region motif; that stretch reads PTADSLHIGH. Residues Y171 and Q175 each contribute to the L-tyrosine site. The 'KMSKS' region signature appears at 231–235; that stretch reads KFGKT. K234 contributes to the ATP binding site. The S4 RNA-binding domain maps to 353–422; that stretch reads INAVEALVKT…GKYTILRRGK (70 aa).

It belongs to the class-I aminoacyl-tRNA synthetase family. TyrS type 1 subfamily. In terms of assembly, homodimer.

The protein resides in the cytoplasm. The enzyme catalyses tRNA(Tyr) + L-tyrosine + ATP = L-tyrosyl-tRNA(Tyr) + AMP + diphosphate + H(+). Catalyzes the attachment of tyrosine to tRNA(Tyr) in a two-step reaction: tyrosine is first activated by ATP to form Tyr-AMP and then transferred to the acceptor end of tRNA(Tyr). The sequence is that of Tyrosine--tRNA ligase from Neisseria gonorrhoeae (strain ATCC 700825 / FA 1090).